The chain runs to 204 residues: Ribonuclease HII (204 aa).

Residues 13–204 enclose the RNase H type-2 domain; that stretch reads GPVAGCDEAG…VRRAARLHSS (192 aa). Asp19, Glu20, and Asp113 together coordinate a divalent metal cation.

This sequence belongs to the RNase HII family. Mn(2+) is required as a cofactor. Mg(2+) serves as cofactor.

It is found in the cytoplasm. It catalyses the reaction Endonucleolytic cleavage to 5'-phosphomonoester.. Its function is as follows. Endonuclease that specifically degrades the RNA of RNA-DNA hybrids. The chain is Ribonuclease HII from Cutibacterium acnes (strain DSM 16379 / KPA171202) (Propionibacterium acnes).